A 185-amino-acid polypeptide reads, in one-letter code: uncharacterized protein (185 aa).

Positions 1–24 are cleaved as a signal peptide; that stretch reads MPCNRAVFGAFVLALLISLQSVYF. A helical transmembrane segment spans residues 50–70; it reads VAVNVIVEFSFDILFFLCGLL. The segment covering 96–113 has biased composition (basic and acidic residues); that stretch reads ELEHVSSRRRNDSRDDST. The disordered stretch occupies residues 96–185; sequence ELEHVSSRRR…LFTAGGIGLP (90 aa). Residues 114 to 126 show a composition bias toward polar residues; the sequence is VRNVSKTSPLASQ. Positions 127 to 138 are enriched in basic and acidic residues; it reads RSRDHFDGDPRE. Pro residues predominate over residues 139–155; it reads PAPPAYSPADFYPPPAS.

The protein localises to the host membrane. This is an uncharacterized protein from Colorado tick fever virus (strain USA/Florio N-7180) (CTFV).